Consider the following 66-residue polypeptide: MKASELRAKDVAALEQEVKDLLKAHFGLRMQKGTQQLGNTASLRLTRRDIARAKTILAEKKKGAAQ.

This sequence belongs to the universal ribosomal protein uL29 family.

The polypeptide is Large ribosomal subunit protein uL29 (Methylibium petroleiphilum (strain ATCC BAA-1232 / LMG 22953 / PM1)).